The primary structure comprises 297 residues: Mitochondrial nicotinamide adenine dinucleotide transporter SLC25A52 (297 aa).

Solcar repeat units lie at residues 28 to 108, 116 to 200, and 209 to 296; these read VGEM…LSCL, PEFA…IKEH, and AHLV…LLKF. Helical transmembrane passes span 34–51, 85–105, 118–138, 179–199, 215–235, and 268–289; these read YLCGCCAAFNNVAITYPI, LPPLMQKTTTLALMFGLYEDL, FATHGVAAVLAGTAEAIFTPL, ILFRNGLSNVLFFGLRGPIKE, FIGGGLLGAMLGFLCFPINVV, and LFRGAHLNYHRSLISWGIINAT.

This sequence belongs to the mitochondrial carrier (TC 2.A.29) family.

The protein resides in the mitochondrion inner membrane. It catalyses the reaction NAD(+)(in) = NAD(+)(out). In terms of biological role, mitochondrial membrane carrier protein that mediates the import of NAD(+) into mitochondria. Compared to SLC25A51, SLC25A52-mediated transport is not essential for the import of NAD(+) in mitochondria. The transport mechanism, uniport or antiport, its electrogenicity and substrate selectivity, remain to be elucidated. The chain is Mitochondrial nicotinamide adenine dinucleotide transporter SLC25A52 from Homo sapiens (Human).